The sequence spans 72 residues: Translation initiation factor IF-1 (72 aa).

Residues 1-72 form the S1-like domain; it reads MSDKSIKMQA…SNGRITYRHK (72 aa).

Belongs to the IF-1 family. In terms of assembly, component of the 30S ribosomal translation pre-initiation complex which assembles on the 30S ribosome in the order IF-2 and IF-3, IF-1 and N-formylmethionyl-tRNA(fMet); mRNA recruitment can occur at any time during PIC assembly.

The protein resides in the cytoplasm. Its function is as follows. One of the essential components for the initiation of protein synthesis. Stabilizes the binding of IF-2 and IF-3 on the 30S subunit to which N-formylmethionyl-tRNA(fMet) subsequently binds. Helps modulate mRNA selection, yielding the 30S pre-initiation complex (PIC). Upon addition of the 50S ribosomal subunit IF-1, IF-2 and IF-3 are released leaving the mature 70S translation initiation complex. This is Translation initiation factor IF-1 from Mycoplasmopsis pulmonis (strain UAB CTIP) (Mycoplasma pulmonis).